The chain runs to 532 residues: Maternal protein exuperantia (532 aa).

Disordered regions lie at residues 206 to 251 (CSAS…NAVQ) and 403 to 491 (TVKP…NGLK). Low complexity-rich tracts occupy residues 220–231 (GSSMVSDSVSIS) and 404–417 (VKPV…NNNN). Polar residues predominate over residues 454–467 (SVSSLPDSTTKTPS). Ser-467 carries the post-translational modification Phosphoserine.

In terms of assembly, component of the osk RNP complex, which is composed of at least exuperantia (exu), ypsilon schachtel (yps), aret (bruno), cup, and the mRNA of osk. In the sponge body, forms a ribonucleoprotein complex (RNP) containing at least me31B, exu, yps and the mRNA of osk; interactions with exu and yps are RNA dependent.

The protein resides in the cytoplasm. Its subcellular location is the cytoplasmic ribonucleoprotein granule. Ensures the proper localization of the mRNA of the bicoid gene to the anterior regions of the oocyte thus playing a fundamental role in the establishment of the polarity of the oocyte. May bind the bcd mRNA. In Drosophila melanogaster (Fruit fly), this protein is Maternal protein exuperantia (exu).